The primary structure comprises 706 residues: Cyclic nucleotide-gated ion channel 18 (706 aa).

Topologically, residues 1 to 53 are cytoplasmic; the sequence is MNKIRSLRCLLPETITSASTAASNRGSDGSQFSVLWRHQILDPDSNIVTYWNH. The helical transmembrane segment at 54–74 threads the bilayer; that stretch reads VFLITSILALFLDPFYFYVPY. Residues 75–86 lie on the Extracellular side of the membrane; sequence VGGPACLSIDIS. A helical transmembrane segment spans residues 87–107; that stretch reads LAATVTFFRTVADIFHLLHIF. Residues 108–142 lie on the Cytoplasmic side of the membrane; it reads MKFRTAFVARSSRVFGRGELVMDSREIAMRYLKTD. The helical transmembrane segment at 143–163 threads the bilayer; sequence FLIDVAAMLPLPQLVIWLVIP. Topologically, residues 164–174 are extracellular; the sequence is AATNGTANHAN. Residues 175–195 form a helical membrane-spanning segment; the sequence is STLALIVLVQYIPRSFIIFPL. The Cytoplasmic portion of the chain corresponds to 196–217; it reads NQRIIKTTGFIAKTAWAGAAYN. The chain crosses the membrane as a helical span at residues 218–238; sequence LLLYILASHVLGAMWYLSSIG. At 239–345 the chain is on the extracellular side; it reads RQFSCWSNVC…ITTSVYLGET (107 aa). The chain crosses the membrane as a helical span at residues 346-366; that stretch reads LFCITICIFGLILFTLLIGNM. Residues 367-706 lie on the Cytoplasmic side of the membrane; it reads QSSLQSMSVR…PDFSIDKEDV (340 aa). A nucleoside 3',5'-cyclic phosphate contacts are provided by residues 449-579 and Glu520; that span reads FFSQ…AFRY. Residues 565–580 are calmodulin-binding; it reads FKRLQSKKLQHAFRYY. The region spanning 585–614 is the IQ domain; sequence RAWGACFVQSAWRRYKRRKLAKELSLHESS. The disordered stretch occupies residues 661–706; sequence ANTRRGTNQKASSSSTGKKDGSSTSLKMPQLFKPDEPDFSIDKEDV. Over residues 693–706 the composition is skewed to basic and acidic residues; the sequence is KPDEPDFSIDKEDV.

Belongs to the cyclic nucleotide-gated cation channel (TC 1.A.1.5) family. Homomultimer. Interacts with CPK32. As to expression, expressed in pollen grains. Not detected in leaves, roots or root hairs.

It is found in the cell membrane. It localises to the cytoplasmic vesicle membrane. Its function is as follows. Cyclic nucleotide-gated ion channel required for directional pollen tube growth into the transmitting tract. Acts as a Ca(2+)-permeable divalent cation-selective channel inhibited by either lanthanum or gadolinium. Regulated by CPK32 to mediate Ca(2+) transport across the plasma membrane in response to Ca(2+) oscillation. The protein is Cyclic nucleotide-gated ion channel 18 of Arabidopsis thaliana (Mouse-ear cress).